The sequence spans 176 residues: Transmembrane protein 238 (176 aa).

The interval 1-21 (MAAASPVCGSQASAVGASSPP) is disordered. Over 1–36 (MAAASPVCGSQASAVGASSPPAPAPAPAAGLGRCRM) the chain is Cytoplasmic. Residues 9–19 (GSQASAVGASS) show a composition bias toward low complexity. A helical membrane pass occupies residues 37-57 (ALLLAVALDVAGMAALLTGVF). Over 58–69 (AQLQVRGRDFGD) the chain is Extracellular. The helical transmembrane segment at 70–90 (LLIYSGALLVFLSLLGWILWY) threads the bilayer. The Cytoplasmic segment spans residues 91 to 176 (TGNIEISRQE…GSVAAGTGSE (86 aa)). Low complexity predominate over residues 124–135 (SAPATASPRTTA). The interval 124-156 (SAPATASPRTTAGLRSARRANRAPQPSSSGSRR) is disordered. Residue serine 175 is modified to Phosphoserine.

The protein localises to the membrane. This Mus musculus (Mouse) protein is Transmembrane protein 238 (Tmem238).